A 227-amino-acid chain; its full sequence is DNA repair protein RecO (227 aa).

The protein belongs to the RecO family.

Its function is as follows. Involved in DNA repair and RecF pathway recombination. The sequence is that of DNA repair protein RecO from Pseudomonas putida (strain GB-1).